A 336-amino-acid chain; its full sequence is Dihydroorotate dehydrogenase (quinone) (336 aa).

FMN-binding positions include 62-66 (AGLDK) and threonine 86. A substrate-binding site is contributed by lysine 66. 111 to 115 (NRMGF) is a substrate binding site. FMN is bound by residues asparagine 139 and asparagine 172. Residue asparagine 172 coordinates substrate. The Nucleophile role is filled by serine 175. Asparagine 177 provides a ligand contact to substrate. Residues lysine 217 and threonine 245 each coordinate FMN. Substrate is bound at residue 246-247 (NT). Residues glycine 268, glycine 297, and 318-319 (YS) each bind FMN.

This sequence belongs to the dihydroorotate dehydrogenase family. Type 2 subfamily. As to quaternary structure, monomer. It depends on FMN as a cofactor.

The protein localises to the cell membrane. The enzyme catalyses (S)-dihydroorotate + a quinone = orotate + a quinol. The protein operates within pyrimidine metabolism; UMP biosynthesis via de novo pathway; orotate from (S)-dihydroorotate (quinone route): step 1/1. Functionally, catalyzes the conversion of dihydroorotate to orotate with quinone as electron acceptor. The sequence is that of Dihydroorotate dehydrogenase (quinone) from Pectobacterium atrosepticum (strain SCRI 1043 / ATCC BAA-672) (Erwinia carotovora subsp. atroseptica).